The following is a 274-amino-acid chain: Diaminopimelate epimerase (274 aa).

Substrate contacts are provided by Asn-11, Gln-44, and Asn-64. Catalysis depends on Cys-73, which acts as the Proton donor. Substrate-binding positions include 74–75, Asn-157, Asn-190, and 208–209; these read GN and ER. The Proton acceptor role is filled by Cys-217. 218–219 provides a ligand contact to substrate; that stretch reads GS.

This sequence belongs to the diaminopimelate epimerase family. In terms of assembly, homodimer.

It is found in the cytoplasm. It carries out the reaction (2S,6S)-2,6-diaminopimelate = meso-2,6-diaminopimelate. It functions in the pathway amino-acid biosynthesis; L-lysine biosynthesis via DAP pathway; DL-2,6-diaminopimelate from LL-2,6-diaminopimelate: step 1/1. Catalyzes the stereoinversion of LL-2,6-diaminopimelate (L,L-DAP) to meso-diaminopimelate (meso-DAP), a precursor of L-lysine and an essential component of the bacterial peptidoglycan. This Actinobacillus pleuropneumoniae serotype 3 (strain JL03) protein is Diaminopimelate epimerase.